Here is a 457-residue protein sequence, read N- to C-terminus: Bifunctional protein GlmU (457 aa).

A pyrophosphorylase region spans residues 1-230; it reads MPLSLPLHIV…PREVEGVNDL (230 aa). UDP-N-acetyl-alpha-D-glucosamine contacts are provided by residues 12–15, Lys-26, Gln-78, 83–84, 105–107, Gly-140, Glu-155, Asn-170, and Asn-228; these read LAAG, GT, and YGD. Asp-107 is a binding site for Mg(2+). Asn-228 contributes to the Mg(2+) binding site. The tract at residues 231 to 251 is linker; that stretch reads WQLTQLERTWQIRAARALCLQ. The segment at 252–457 is N-acetyltransferase; that stretch reads GARVADPARL…DGWQRPKKKT (206 aa). UDP-N-acetyl-alpha-D-glucosamine is bound by residues Arg-334 and Lys-352. The active-site Proton acceptor is the His-364. UDP-N-acetyl-alpha-D-glucosamine contacts are provided by Tyr-367 and Asn-378. Residues Ala-381, 387–388, Ser-406, Ala-424, and Arg-441 each bind acetyl-CoA; that span reads NY.

The protein in the N-terminal section; belongs to the N-acetylglucosamine-1-phosphate uridyltransferase family. This sequence in the C-terminal section; belongs to the transferase hexapeptide repeat family. As to quaternary structure, homotrimer. Mg(2+) is required as a cofactor.

It localises to the cytoplasm. It catalyses the reaction alpha-D-glucosamine 1-phosphate + acetyl-CoA = N-acetyl-alpha-D-glucosamine 1-phosphate + CoA + H(+). It carries out the reaction N-acetyl-alpha-D-glucosamine 1-phosphate + UTP + H(+) = UDP-N-acetyl-alpha-D-glucosamine + diphosphate. The protein operates within nucleotide-sugar biosynthesis; UDP-N-acetyl-alpha-D-glucosamine biosynthesis; N-acetyl-alpha-D-glucosamine 1-phosphate from alpha-D-glucosamine 6-phosphate (route II): step 2/2. It functions in the pathway nucleotide-sugar biosynthesis; UDP-N-acetyl-alpha-D-glucosamine biosynthesis; UDP-N-acetyl-alpha-D-glucosamine from N-acetyl-alpha-D-glucosamine 1-phosphate: step 1/1. Its pathway is bacterial outer membrane biogenesis; LPS lipid A biosynthesis. Catalyzes the last two sequential reactions in the de novo biosynthetic pathway for UDP-N-acetylglucosamine (UDP-GlcNAc). The C-terminal domain catalyzes the transfer of acetyl group from acetyl coenzyme A to glucosamine-1-phosphate (GlcN-1-P) to produce N-acetylglucosamine-1-phosphate (GlcNAc-1-P), which is converted into UDP-GlcNAc by the transfer of uridine 5-monophosphate (from uridine 5-triphosphate), a reaction catalyzed by the N-terminal domain. In Xylella fastidiosa (strain M12), this protein is Bifunctional protein GlmU.